The primary structure comprises 340 residues: Ketol-acid reductoisomerase (NADP(+)) (340 aa).

The KARI N-terminal Rossmann domain maps to 5–182 (MEYEKDVKVA…GSARVGLLET (178 aa)). NADP(+)-binding positions include 26-29 (YGSQ), R49, S53, and 83-86 (DEIQ). The active site involves H108. G134 serves as a coordination point for NADP(+). Positions 183 to 328 (TYKEETEEDL…AELRKAMPFV (146 aa)) constitute a KARI C-terminal knotted domain. Mg(2+) contacts are provided by D191, E195, E227, and E231. S252 lines the substrate pocket.

The protein belongs to the ketol-acid reductoisomerase family. It depends on Mg(2+) as a cofactor.

The catalysed reaction is (2R)-2,3-dihydroxy-3-methylbutanoate + NADP(+) = (2S)-2-acetolactate + NADPH + H(+). It catalyses the reaction (2R,3R)-2,3-dihydroxy-3-methylpentanoate + NADP(+) = (S)-2-ethyl-2-hydroxy-3-oxobutanoate + NADPH + H(+). The protein operates within amino-acid biosynthesis; L-isoleucine biosynthesis; L-isoleucine from 2-oxobutanoate: step 2/4. Its pathway is amino-acid biosynthesis; L-valine biosynthesis; L-valine from pyruvate: step 2/4. Involved in the biosynthesis of branched-chain amino acids (BCAA). Catalyzes an alkyl-migration followed by a ketol-acid reduction of (S)-2-acetolactate (S2AL) to yield (R)-2,3-dihydroxy-isovalerate. In the isomerase reaction, S2AL is rearranged via a Mg-dependent methyl migration to produce 3-hydroxy-3-methyl-2-ketobutyrate (HMKB). In the reductase reaction, this 2-ketoacid undergoes a metal-dependent reduction by NADPH to yield (R)-2,3-dihydroxy-isovalerate. This chain is Ketol-acid reductoisomerase (NADP(+)), found in Streptococcus sanguinis (strain SK36).